Here is a 626-residue protein sequence, read N- to C-terminus: Division abnormally delayed protein (626 aa).

The first 26 residues, 1–26 (MAARSVRLAQLLLFTLLCGFVGLSAA), serve as a signal peptide directing secretion. A compositionally biased stretch (basic residues) spans 41-52 (LHSATTHHRRRL). The tract at residues 41–65 (LHSATTHHRRRLQRDSRAKDAVGGS) is disordered. N-linked (GlcNAc...) asparagine; atypical glycosylation occurs at N97. Residues N101, N150, and N187 are each glycosylated (N-linked (GlcNAc...) asparagine). The tract at residues 533–607 (NSIQATHDIQ…GKTSGSNPLE (75 aa)) is disordered. S549, S569, S573, and S601 each carry an O-linked (Xyl...) (heparan sulfate) serine glycan. Over residues 565–575 (GAHGSGDGSGD) the composition is skewed to gly residues. The GPI-anchor amidated glycine moiety is linked to residue G602. Positions 603 to 626 (SNPLEGTATWMLLTLVTMLFSSCS) are cleaved as a propeptide — removed in mature form.

It belongs to the glypican family. Interacts with nord; the interaction promotes dally degradation. Interacts with Magu. As part of the dally/ Magu complex, associates with fwe (isoforms ubi, LoseA and LoseB) and is unable to interact with fwe independently of Magu.

It localises to the cell membrane. Cell surface proteoglycan that bears heparan sulfate. Functions as a coreceptor for growth factors and morphogens, such as the products of dpp, to regulate signaling and distribution of these ligands. Required for cell division patterning during postembryonic development of the nervous system. Plays a role in dpp/BMP signaling possibly by stabilizing dpp and thereby creating a morphological gradient during wing development. Might have a role in testis development. Functions with magu and fwe in a mechanism of scaling, which utilises apoptosis to ensure that the dpp patterning gradient remains proportional to the size of the growing wing. In this mechanism, fwe represses dally and Magu-dependent activity in expanding the gradient, and dally/Magu inhibits fwe-dependent apoptosis to keep cell death rate low. When the levels of these different proteins are optimally regulated the gradient correctly scales with organ growth but when this fails, fwe-mediated apoptosis is activated to trim the developing tissue to match the correct size of the gradient. The sequence is that of Division abnormally delayed protein (dally) from Drosophila melanogaster (Fruit fly).